The chain runs to 151 residues: Globin CTT-X (151 aa).

The region spanning 6 to 150 (TLDAHEVEQV…AFSVIFEVLE (145 aa)) is the Globin domain. Heme b contacts are provided by H64 and H99.

This sequence belongs to the globin family. As to quaternary structure, homodimer.

The chain is Globin CTT-X (CTT-10) from Chironomus thummi thummi (Midge).